The chain runs to 238 residues: Pyridoxine 5'-phosphate synthase (238 aa).

Asn7 provides a ligand contact to 3-amino-2-oxopropyl phosphate. Residue 9 to 10 (DH) coordinates 1-deoxy-D-xylulose 5-phosphate. Arg18 contacts 3-amino-2-oxopropyl phosphate. His43 (proton acceptor) is an active-site residue. Arg45 and His50 together coordinate 1-deoxy-D-xylulose 5-phosphate. Residue Glu70 is the Proton acceptor of the active site. Thr100 contacts 1-deoxy-D-xylulose 5-phosphate. Residue His191 is the Proton donor of the active site. 3-amino-2-oxopropyl phosphate contacts are provided by residues Gly192 and 213–214 (GH).

Belongs to the PNP synthase family. In terms of assembly, homooctamer; tetramer of dimers.

It localises to the cytoplasm. The enzyme catalyses 3-amino-2-oxopropyl phosphate + 1-deoxy-D-xylulose 5-phosphate = pyridoxine 5'-phosphate + phosphate + 2 H2O + H(+). The protein operates within cofactor biosynthesis; pyridoxine 5'-phosphate biosynthesis; pyridoxine 5'-phosphate from D-erythrose 4-phosphate: step 5/5. Functionally, catalyzes the complicated ring closure reaction between the two acyclic compounds 1-deoxy-D-xylulose-5-phosphate (DXP) and 3-amino-2-oxopropyl phosphate (1-amino-acetone-3-phosphate or AAP) to form pyridoxine 5'-phosphate (PNP) and inorganic phosphate. The sequence is that of Pyridoxine 5'-phosphate synthase from Syntrophobacter fumaroxidans (strain DSM 10017 / MPOB).